We begin with the raw amino-acid sequence, 726 residues long: Cyclin-T1 (726 aa).

Residue serine 117 is modified to Phosphoserine. Positions 253 to 270 (KRIWNWRACEAAKKTKAD) match the Nuclear localization signal, and interaction with Tat-TAR RNA motif. A Phosphoserine modification is found at serine 340. A Glycyl lysine isopeptide (Lys-Gly) (interchain with G-Cter in SUMO2) cross-link involves residue lysine 342. The segment at 360 to 385 (VDHSLPQDGSNAFISQKQNSKSVPSA) is disordered. Residues 366 to 382 (QDGSNAFISQKQNSKSV) are compositionally biased toward polar residues. Positions 384–425 (SAKVSLKEYRAKHAEELAAQKRQLENMEANVKSQYAYAAQNL) form a coiled coil. Phosphoserine is present on serine 388. Lysine 390 bears the N6-acetyllysine mark. A Glycyl lysine isopeptide (Lys-Gly) (interchain with G-Cter in SUMO2) cross-link involves residue lysine 415. Residues serine 416, serine 474, and serine 475 each carry the ADP-ribosylserine modification. Positions 480–550 (IKMRIKVHAA…RPGDPKHSSQ (71 aa)) are histidine-rich domain (HRD). A Glycyl lysine isopeptide (Lys-Gly) (interchain with G-Cter in SUMO2) cross-link involves residue lysine 481. Lysine 485 is subject to N6-(ADP-ribosyl)lysine. The residue at position 487 (histidine 487) is an ADP-ribosylhistidine. Residues 487–506 (HAAADKHNSVEDSVTKSREH) are compositionally biased toward basic and acidic residues. Disordered regions lie at residues 487-650 (HAAA…NGHN) and 688-726 (SDYL…PLPK). Phosphoserine is present on residues serine 495 and serine 499. Over residues 507–530 (KEKHKTHPSNHHHHHNHHSHKHSH) the composition is skewed to basic residues. A required for interaction with ZMYND8 region spans residues 527 to 570 (KHSHSQLPVGTGNKRPGDPKHSSQTSNLAHKTYSLSSSFSSSSS). Residue histidine 530 is modified to ADP-ribosylhistidine. An ADP-ribosylserine mark is found at serine 531, serine 549, and serine 552. Histidine 556 bears the ADP-ribosylhistidine mark. The segment covering 560-570 (SLSSSFSSSSS) has biased composition (low complexity). Residue serine 563 is modified to ADP-ribosylserine. Phosphoserine occurs at positions 564 and 577. Residues 594–609 (STKSSSLNFSFPSLPT) show a composition bias toward low complexity. Residues 615-630 (GHSSDTSGLSFSQPSC) show a composition bias toward polar residues. Serine 637 is subject to ADP-ribosylserine. Positions 710–726 (PPPLPSEPPPPLPPLPK) are enriched in pro residues.

Belongs to the cyclin family. Cyclin C subfamily. Cyclin-T1 is the predominant cyclin that associates with CDK9 to form a heterodimer called P-TEFb. P-TEFb forms a complex with AFF4/AF5Q31. Component of a complex which is at least composed of HTATSF1/Tat-SF1, P-TEFb complex, RNA pol II, SUPT5H, and NCL/nucleolin. Component of the 7SK snRNP complex at least composed of P-TEFb (composed of CDK9 and CCNT1/cyclin-T1), HEXIM1, HEXIM2, BCDIN3, SART3 proteins and 7SK and U6 snRNAs. Interacts (via central region) with ZMYND8 (via N-terminus); the interaction is direct and the association appears to occur between homodimeric ZMYND8 and the activated form of the P-TEFb complex. Interacts with BRD4, targets chromatin binding. Interacts with JMJD6. Interacts with MDFIC. Interacts with HSF1. Interacts with HTATSF1. Interacts with TBX21. In terms of assembly, (Microbial infection) Interacts with the transactivation region of HIV-1, HIV-2 and SIV Tat. As to quaternary structure, (Microbial infection) Interacts with human herpes virus 1 (HHV-1) transcriptional regulator ICP22. In terms of processing, ADP-ribosylation on serine residues by PARP1 in response to DNA damage disrupts the phase separation activity of CCNT1, thereby preventing activation of CDK9. Ubiquitously expressed.

It localises to the nucleus. Its function is as follows. Regulatory subunit of the cyclin-dependent kinase pair (CDK9/cyclin-T1) complex, also called positive transcription elongation factor B (P-TEFb), which facilitates the transition from abortive to productive elongation by phosphorylating the CTD (C-terminal domain) of the large subunit of RNA polymerase II (RNA Pol II). Required to activate the protein kinase activity of CDK9: acts by mediating formation of liquid-liquid phase separation (LLPS) that enhances binding of P-TEFb to the CTD of RNA Pol II. (Microbial infection) In case of HIV or SIV infections, binds to the transactivation domain of the viral nuclear transcriptional activator, Tat, thereby increasing Tat's affinity for the transactivating response RNA element (TAR RNA). Serves as an essential cofactor for Tat, by promoting RNA Pol II activation, allowing transcription of viral genes. The sequence is that of Cyclin-T1 (CCNT1) from Homo sapiens (Human).